The chain runs to 170 residues: Small ribosomal subunit protein uS5 (170 aa).

The S5 DRBM domain maps to 12-75 (LSELLVSVRR…NAAKKSMIRV (64 aa)).

Belongs to the universal ribosomal protein uS5 family. Part of the 30S ribosomal subunit. Contacts proteins S4 and S8.

Its function is as follows. With S4 and S12 plays an important role in translational accuracy. Located at the back of the 30S subunit body where it stabilizes the conformation of the head with respect to the body. The chain is Small ribosomal subunit protein uS5 from Wolbachia pipientis wMel.